The chain runs to 325 residues: Pyruvate dehydrogenase E1 component subunit beta (325 aa).

E60 serves as a coordination point for thiamine diphosphate.

In terms of assembly, heterodimer of an alpha and a beta chain. It depends on thiamine diphosphate as a cofactor.

It carries out the reaction N(6)-[(R)-lipoyl]-L-lysyl-[protein] + pyruvate + H(+) = N(6)-[(R)-S(8)-acetyldihydrolipoyl]-L-lysyl-[protein] + CO2. In terms of biological role, the pyruvate dehydrogenase complex catalyzes the overall conversion of pyruvate to acetyl-CoA and CO(2). It contains multiple copies of three enzymatic components: pyruvate dehydrogenase (E1), dihydrolipoamide acetyltransferase (E2) and lipoamide dehydrogenase (E3). The chain is Pyruvate dehydrogenase E1 component subunit beta (pdhB) from Staphylococcus epidermidis (strain ATCC 35984 / DSM 28319 / BCRC 17069 / CCUG 31568 / BM 3577 / RP62A).